The following is a 90-amino-acid chain: Acylphosphatase (90 aa).

The Acylphosphatase-like domain maps to 5–90 (CVKASVKGIV…WRHIDGFEIK (86 aa)). Active-site residues include Arg20 and Asn38.

Belongs to the acylphosphatase family.

It carries out the reaction an acyl phosphate + H2O = a carboxylate + phosphate + H(+). The sequence is that of Acylphosphatase (acyP) from Photobacterium profundum (strain SS9).